A 380-amino-acid chain; its full sequence is Cytochrome b (380 aa).

The next 4 membrane-spanning stretches (helical) occupy residues 34-54 (FGSLLGICLMTQILTGLLLAM), 78-99 (WLIRNLHANGASLFFICIYLHI), 114-134 (WNTGVILLLTLMATAFVGYVL), and 179-199 (FFALHFLLPFIIAGLTLIHLT). Heme b is bound by residues histidine 84 and histidine 98. 2 residues coordinate heme b: histidine 183 and histidine 197. Histidine 202 serves as a coordination point for a ubiquinone. The next 4 membrane-spanning stretches (helical) occupy residues 227 to 247 (TKDILGFIILLLPLMTLAMFA), 289 to 309 (LGGVLALAASVLVLFLAPFLH), 321 to 341 (LSQLLFWTLVANLFILTWIGS), and 348 to 368 (FIITGQLASLTYFTILLILFP).

This sequence belongs to the cytochrome b family. In terms of assembly, the cytochrome bc1 complex contains 11 subunits: 3 respiratory subunits (MT-CYB, CYC1 and UQCRFS1), 2 core proteins (UQCRC1 and UQCRC2) and 6 low-molecular weight proteins (UQCRH/QCR6, UQCRB/QCR7, UQCRQ/QCR8, UQCR10/QCR9, UQCR11/QCR10 and a cleavage product of UQCRFS1). This cytochrome bc1 complex then forms a dimer. It depends on heme b as a cofactor.

It is found in the mitochondrion inner membrane. Component of the ubiquinol-cytochrome c reductase complex (complex III or cytochrome b-c1 complex) that is part of the mitochondrial respiratory chain. The b-c1 complex mediates electron transfer from ubiquinol to cytochrome c. Contributes to the generation of a proton gradient across the mitochondrial membrane that is then used for ATP synthesis. The sequence is that of Cytochrome b (MT-CYB) from Aphanotriccus audax (Black-billed flycatcher).